The chain runs to 487 residues: Cytochrome P450 716A75 (487 aa).

A helical transmembrane segment spans residues 5–25; the sequence is FVSLLSLFLLILLPLSLLFLF. Cys-434 lines the heme pocket.

Belongs to the cytochrome P450 family. It depends on heme as a cofactor.

It localises to the membrane. It catalyses the reaction beta-amyrin + reduced [NADPH--hemoprotein reductase] + O2 = erythrodiol + oxidized [NADPH--hemoprotein reductase] + H2O + H(+). The catalysed reaction is erythrodiol + reduced [NADPH--hemoprotein reductase] + O2 = oleanolic aldehyde + oxidized [NADPH--hemoprotein reductase] + 2 H2O + H(+). It carries out the reaction oleanolic aldehyde + reduced [NADPH--hemoprotein reductase] + O2 = oleanolate + oxidized [NADPH--hemoprotein reductase] + H2O + 2 H(+). In terms of biological role, catalyzes the C-28 oxidation of beta-amyrin to form erythrodiol. Catalyzes the C-28 oxidation of erythrodiol to form oleanolic aldehyde. Catalyzes the C-28 oxidation of oleanolic aldehyde to form oleanolate. This chain is Cytochrome P450 716A75, found in Maesa lanceolata (False assegai).